We begin with the raw amino-acid sequence, 369 residues long: Chaperone protein DnaJ (369 aa).

Positions 4 to 69 constitute a J domain; the sequence is SYYEILEVEK…KKRALYDRYG (66 aa). Residues 130 to 207 form a CR-type zinc finger; it reads GCKKTIKAQY…CKGKTYILKD (78 aa). Zn(2+)-binding residues include Cys143, Cys146, Cys159, Cys162, Cys181, Cys184, Cys195, and Cys198. CXXCXGXG motif repeat units follow at residues 143-150, 159-166, 181-188, and 195-202; these read CESCDGTG, CKQCNGQG, CGACQGKG, and CQACKGKT.

Belongs to the DnaJ family. As to quaternary structure, homodimer. Requires Zn(2+) as cofactor.

The protein resides in the cytoplasm. Its function is as follows. Participates actively in the response to hyperosmotic and heat shock by preventing the aggregation of stress-denatured proteins and by disaggregating proteins, also in an autonomous, DnaK-independent fashion. Unfolded proteins bind initially to DnaJ; upon interaction with the DnaJ-bound protein, DnaK hydrolyzes its bound ATP, resulting in the formation of a stable complex. GrpE releases ADP from DnaK; ATP binding to DnaK triggers the release of the substrate protein, thus completing the reaction cycle. Several rounds of ATP-dependent interactions between DnaJ, DnaK and GrpE are required for fully efficient folding. Also involved, together with DnaK and GrpE, in the DNA replication of plasmids through activation of initiation proteins. The protein is Chaperone protein DnaJ of Helicobacter pylori (strain J99 / ATCC 700824) (Campylobacter pylori J99).